The following is a 376-amino-acid chain: Protein RecA (376 aa).

65-72 is a binding site for ATP; sequence GPESSGKT. The interval 316–376 is disordered; the sequence is EHDEIFTSVR…GDDLSDDDIY (61 aa). The segment covering 331-350 has biased composition (basic and acidic residues); that stretch reads GEKKDSDEDPGDNKKSKDSA. Residues 366-376 are compositionally biased toward acidic residues; the sequence is PGDDLSDDDIY.

The protein belongs to the RecA family.

It is found in the cytoplasm. In terms of biological role, can catalyze the hydrolysis of ATP in the presence of single-stranded DNA, the ATP-dependent uptake of single-stranded DNA by duplex DNA, and the ATP-dependent hybridization of homologous single-stranded DNAs. It interacts with LexA causing its activation and leading to its autocatalytic cleavage. This chain is Protein RecA, found in Oenococcus oeni (strain ATCC BAA-331 / PSU-1).